The following is a 280-amino-acid chain: DNA repair protein XRCC2 (280 aa).

S10 carries the phosphoserine modification.

Belongs to the RecA family. RAD51 subfamily. Interacts with RAD51D. Part of the BCDX2 complex consisting of RAD51B, RAD51C, RAD51D and XRCC2; the complex has a ring-like structure arranged into a flat disk around a central channel. In the absence of DNA, the BCDX2 subcomplex XRCC2:RAD51D formed a multimeric ring structure; in the presence of single-stranded DNA it formed a filamentous structure with the ssDNA.

It localises to the nucleus. Its subcellular location is the cytoplasm. The protein localises to the cytoskeleton. It is found in the microtubule organizing center. The protein resides in the centrosome. Involved in the homologous recombination repair (HRR) pathway of double-stranded DNA, thought to repair chromosomal fragmentation, translocations and deletions. Part of the RAD51 paralog protein complex BCDX2 which acts in the BRCA1-BRCA2-dependent HR pathway. Upon DNA damage, BCDX2 acts downstream of BRCA2 recruitment and upstream of RAD51 recruitment. BCDX2 binds predominantly to the intersection of the four duplex arms of the Holliday junction and to junction of replication forks. The BCDX2 complex was originally reported to bind single-stranded DNA, single-stranded gaps in duplex DNA and specifically to nicks in duplex DNA. This Homo sapiens (Human) protein is DNA repair protein XRCC2 (XRCC2).